We begin with the raw amino-acid sequence, 257 residues long: 3-methyl-2-oxobutanoate hydroxymethyltransferase (257 aa).

Residues Asp42 and Asp86 each coordinate Mg(2+). Residues Asp42–Ser43, Asp86, and Lys116 each bind 3-methyl-2-oxobutanoate. Glu118 is a Mg(2+) binding site. The active-site Proton acceptor is Glu185.

The protein belongs to the PanB family. In terms of assembly, homodecamer; pentamer of dimers. Mg(2+) is required as a cofactor.

Its subcellular location is the cytoplasm. The enzyme catalyses 3-methyl-2-oxobutanoate + (6R)-5,10-methylene-5,6,7,8-tetrahydrofolate + H2O = 2-dehydropantoate + (6S)-5,6,7,8-tetrahydrofolate. Its pathway is cofactor biosynthesis; (R)-pantothenate biosynthesis; (R)-pantoate from 3-methyl-2-oxobutanoate: step 1/2. Its function is as follows. Catalyzes the reversible reaction in which hydroxymethyl group from 5,10-methylenetetrahydrofolate is transferred onto alpha-ketoisovalerate to form ketopantoate. This chain is 3-methyl-2-oxobutanoate hydroxymethyltransferase, found in Prochlorococcus marinus (strain AS9601).